Reading from the N-terminus, the 362-residue chain is Spermidine/putrescine import ATP-binding protein PotA (362 aa).

In terms of domain architecture, ABC transporter spans 4–235 (IKLDHITKQY…PVNDFVARFI (232 aa)). Residue 37 to 44 (GPSGSGKT) participates in ATP binding.

This sequence belongs to the ABC transporter superfamily. Spermidine/putrescine importer (TC 3.A.1.11.1) family. In terms of assembly, the complex is composed of two ATP-binding proteins (PotA), two transmembrane proteins (PotB and PotC) and a solute-binding protein (PotD).

The protein localises to the cell membrane. The enzyme catalyses ATP + H2O + polyamine-[polyamine-binding protein]Side 1 = ADP + phosphate + polyamineSide 2 + [polyamine-binding protein]Side 1.. In terms of biological role, part of the ABC transporter complex PotABCD involved in spermidine/putrescine import. Responsible for energy coupling to the transport system. The sequence is that of Spermidine/putrescine import ATP-binding protein PotA from Lactobacillus delbrueckii subsp. bulgaricus (strain ATCC BAA-365 / Lb-18).